A 161-amino-acid polypeptide reads, in one-letter code: Cytochrome c-type biogenesis protein CcmE (161 aa).

Topologically, residues 1-13 (MSWLPKSPKARRR) are cytoplasmic. A helical; Signal-anchor for type II membrane protein transmembrane segment spans residues 14 to 34 (LMLVAAIAPVLAVAAGLTLWG). The Periplasmic portion of the chain corresponds to 35 to 161 (LSDSISFFYT…QRPEHQGDAL (127 aa)). 2 residues coordinate heme: histidine 128 and tyrosine 132.

This sequence belongs to the CcmE/CycJ family.

The protein resides in the cell inner membrane. Its function is as follows. Heme chaperone required for the biogenesis of c-type cytochromes. Transiently binds heme delivered by CcmC and transfers the heme to apo-cytochromes in a process facilitated by CcmF and CcmH. The protein is Cytochrome c-type biogenesis protein CcmE of Phenylobacterium zucineum (strain HLK1).